A 97-amino-acid polypeptide reads, in one-letter code: ESAT-6-like protein EsxS (97 aa).

It belongs to the WXG100 family. CFP-10 subfamily. As to quaternary structure, forms a tight complex with EsxR. Exists in heterodimeric and heterotetrameric forms.

Its subcellular location is the secreted. This chain is ESAT-6-like protein EsxS, found in Mycobacterium tuberculosis (strain ATCC 25618 / H37Rv).